We begin with the raw amino-acid sequence, 230 residues long: Cytidylate kinase (230 aa).

12–20 (GPSGAGKGT) is a binding site for ATP.

Belongs to the cytidylate kinase family. Type 1 subfamily.

The protein localises to the cytoplasm. It carries out the reaction CMP + ATP = CDP + ADP. The catalysed reaction is dCMP + ATP = dCDP + ADP. This is Cytidylate kinase from Shewanella loihica (strain ATCC BAA-1088 / PV-4).